Reading from the N-terminus, the 481-residue chain is UDP-N-acetylmuramate--L-alanine ligase (481 aa).

Residue G122–T128 coordinates ATP.

The protein belongs to the MurCDEF family.

It localises to the cytoplasm. It catalyses the reaction UDP-N-acetyl-alpha-D-muramate + L-alanine + ATP = UDP-N-acetyl-alpha-D-muramoyl-L-alanine + ADP + phosphate + H(+). Its pathway is cell wall biogenesis; peptidoglycan biosynthesis. Its function is as follows. Cell wall formation. This chain is UDP-N-acetylmuramate--L-alanine ligase, found in Treponema pallidum (strain Nichols).